A 121-amino-acid chain; its full sequence is Holin-like protein CidA (121 aa).

3 consecutive transmembrane segments (helical) span residues 27–47 (VHLPIPGSIIGIFLLLISLKF), 58–78 (GADFLLKELILFFIPSAVAVI), and 89–109 (IDLIFIIMISTLCVTLVTGIL).

Belongs to the CidA/LrgA family. CidA subfamily.

Its subcellular location is the cell membrane. Its function is as follows. Increases the activity of extracellular murein hydrolases possibly by mediating their export via hole formation. Inhibited by the antiholin-like proteins LrgAB. In an unstressed cell, the LrgAB products probably inhibit the function of the CidA protein. When a cell is stressed by the addition of antibiotics or by other factors in the environment, CidA possibly oligomerizes within the bacterial cell membrane, creating lesions that disrupt the proton motive force, which in turn results in loss of cell viability. These lesions are also hypothesized to regulate the subsequent cell lysis by either allowing the murein hydrolases access to the cell wall substrate and/or regulating their activity by a possible change in the cell wall pH that results from loss of membrane potential. The sequence is that of Holin-like protein CidA from Bacillus cytotoxicus (strain DSM 22905 / CIP 110041 / 391-98 / NVH 391-98).